A 142-amino-acid polypeptide reads, in one-letter code: MKTYSAKPADVQRDWYVVDANGKTLGRLASEVAYRLRGKHKPEYTPHVDTGDYIVVVNAEKIAVTGNKASDKMYHQHTGYIGNMKSISFEKLIDKAPERVIEKAVKGMLPKNRLGRAMIKKLKVYAGGEHRHAAQQPQPLDI.

The protein belongs to the universal ribosomal protein uL13 family. Part of the 50S ribosomal subunit.

Functionally, this protein is one of the early assembly proteins of the 50S ribosomal subunit, although it is not seen to bind rRNA by itself. It is important during the early stages of 50S assembly. The chain is Large ribosomal subunit protein uL13 from Alkalilimnicola ehrlichii (strain ATCC BAA-1101 / DSM 17681 / MLHE-1).